Consider the following 123-residue polypeptide: MPTINQLIANPREVQKSRKKVPALQQSPQKRGVCTRVYTTTPKKPNSALRKVAKVRLTNGFEVIGYIPGEGHNLQEHSVVMIRGGRVKDLPGVRYHILRGVLDTQGVKNRKQRRSKYGAKRPK.

Residues 9 to 32 (ANPREVQKSRKKVPALQQSPQKRG) form a disordered region. The residue at position 89 (Asp-89) is a 3-methylthioaspartic acid.

The protein belongs to the universal ribosomal protein uS12 family. In terms of assembly, part of the 30S ribosomal subunit. Contacts proteins S8 and S17. May interact with IF1 in the 30S initiation complex.

In terms of biological role, with S4 and S5 plays an important role in translational accuracy. Its function is as follows. Interacts with and stabilizes bases of the 16S rRNA that are involved in tRNA selection in the A site and with the mRNA backbone. Located at the interface of the 30S and 50S subunits, it traverses the body of the 30S subunit contacting proteins on the other side and probably holding the rRNA structure together. The combined cluster of proteins S8, S12 and S17 appears to hold together the shoulder and platform of the 30S subunit. This Bradyrhizobium sp. (strain BTAi1 / ATCC BAA-1182) protein is Small ribosomal subunit protein uS12.